We begin with the raw amino-acid sequence, 356 residues long: MKFLDEAKVYVRSGDGGNGCVAFRREKFIEFGGPNGGNGGRGGDVVIEAVDGLNTLIDYRYQQHFKAQKGENGMGKDRHGAGGKSIVLKVPVGTQIFDEDRETLIHDFTAVGERFVLAEGGNGGFGNAHFKSPTNRAPRHANPGQPGEERWIWLRMKLIADAGLVGLPNAGKSTFLSKVSAAKPKIADYPFTTLHPQLGVVNADGREFVLADIPGLIEGAHEGAGLGDRFLGHVERCRVLLHLVDATCEHAGKAYKTVRHELEAYGGDLTDKIEIVALNKIDAVDPDELKKQRDRLKRAAKKTPILISGATGEGVKEALRKLADVVGEQPVSSKAKNAVESAATEEPWAAPVPPQG.

Positions 1–159 (MKFLDEAKVY…RWIWLRMKLI (159 aa)) constitute an Obg domain. The region spanning 160–327 (ADAGLVGLPN…ALRKLADVVG (168 aa)) is the OBG-type G domain. GTP is bound by residues 166–173 (GLPNAGKS), 191–195 (FTTLH), 212–215 (DIPG), 279–282 (NKID), and 308–310 (SGA). Residues Ser-173 and Thr-193 each contribute to the Mg(2+) site. Residues 327–356 (GEQPVSSKAKNAVESAATEEPWAAPVPPQG) are disordered.

This sequence belongs to the TRAFAC class OBG-HflX-like GTPase superfamily. OBG GTPase family. Monomer. Requires Mg(2+) as cofactor.

It is found in the cytoplasm. In terms of biological role, an essential GTPase which binds GTP, GDP and possibly (p)ppGpp with moderate affinity, with high nucleotide exchange rates and a fairly low GTP hydrolysis rate. Plays a role in control of the cell cycle, stress response, ribosome biogenesis and in those bacteria that undergo differentiation, in morphogenesis control. This chain is GTPase Obg, found in Bradyrhizobium sp. (strain ORS 278).